Reading from the N-terminus, the 125-residue chain is Large ribosomal subunit protein bL12 (125 aa).

This sequence belongs to the bacterial ribosomal protein bL12 family. As to quaternary structure, homodimer. Part of the ribosomal stalk of the 50S ribosomal subunit. Forms a multimeric L10(L12)X complex, where L10 forms an elongated spine to which 2 to 4 L12 dimers bind in a sequential fashion. Binds GTP-bound translation factors.

Forms part of the ribosomal stalk which helps the ribosome interact with GTP-bound translation factors. Is thus essential for accurate translation. The polypeptide is Large ribosomal subunit protein bL12 (Methylorubrum extorquens (strain CM4 / NCIMB 13688) (Methylobacterium extorquens)).